Here is a 559-residue protein sequence, read N- to C-terminus: YTH domain-containing family protein 1 (559 aa).

A disordered region spans residues 1–49; it reads MSATSVDPQRTKGQDNKVQNGSLHQKDAVHDNDFEPYLSGQSNPSNSYP. Residue S2 is modified to N-acetylserine. Over residues 24 to 33 the composition is skewed to basic and acidic residues; the sequence is HQKDAVHDND. S182 is subject to Phosphoserine. A disordered region spans residues 239-365; sequence SKPAKPQPKM…PTSAPSVESH (127 aa). Low complexity-rich tracts occupy residues 279–305 and 314–326; these read PAPKASAPQQTPSPQAAPQPQQVAQPL and QPQYQSPQQPLQP. Positions 343-361 are enriched in polar residues; that stretch reads GANSDSNSVGNAQPTSAPS. The YTH domain maps to 389-523; it reads GRVFIIKSYS…EKAKQVLKII (135 aa). RNA contacts are provided by residues 395-397, D401, 411-412, N441, W465, and W470; these read KSY and WC.

The protein belongs to the YTHDF family. YTHDF1 subfamily. In terms of assembly, interacts with CNOT1; promoting recruitment of the CCR4-NOT complex. Interacts with ribosomes. Interacts with eIF3 (EIF3A or EIF3B). Interacts with YTHDF3. Post-translationally, ubiquitinated by the CUL7-FBXW8 E3 ligase complex leading to degradation. Deubiquitinated and stabilized by USP5 by removing 'Lys-11'-linked polyubiquitination. As to expression, in brain, preferentially expressed in the hippocampus.

It is found in the cytoplasm. The protein resides in the P-body. Its subcellular location is the stress granule. Functionally, specifically recognizes and binds N6-methyladenosine (m6A)-containing mRNAs, and regulates their stability. M6A is a modification present at internal sites of mRNAs and some non-coding RNAs and plays a role in mRNA stability and processing. Acts as a regulator of mRNA stability by promoting degradation of m6A-containing mRNAs via interaction with the CCR4-NOT complex. The YTHDF paralogs (YTHDF1, YTHDF2 and YTHDF3) share m6A-containing mRNAs targets and act redundantly to mediate mRNA degradation and cellular differentiation. Required to facilitate learning and memory formation in the hippocampus by binding to m6A-containing neuronal mRNAs. Acts as a regulator of axon guidance by binding to m6A-containing ROBO3 transcripts. Acts as a negative regulator of antigen cross-presentation in myeloid dendritic cells. In the context of tumorigenesis, negative regulation of antigen cross-presentation limits the anti-tumor response by reducing efficiency of tumor-antigen cross-presentation. Promotes formation of phase-separated membraneless compartments, such as P-bodies or stress granules, by undergoing liquid-liquid phase separation upon binding to mRNAs containing multiple m6A-modified residues: polymethylated mRNAs act as a multivalent scaffold for the binding of YTHDF proteins, juxtaposing their disordered regions and thereby leading to phase separation. The resulting mRNA-YTHDF complexes then partition into different endogenous phase-separated membraneless compartments, such as P-bodies, stress granules or neuronal RNA granules. In Mus musculus (Mouse), this protein is YTH domain-containing family protein 1.